The following is a 346-amino-acid chain: Ferredoxin--NADP reductase 1 (346 aa).

7 residues coordinate FAD: E37, K45, Y49, I89, P124, D287, and S328.

This sequence belongs to the ferredoxin--NADP reductase type 2 family. In terms of assembly, homodimer. Requires FAD as cofactor.

It carries out the reaction 2 reduced [2Fe-2S]-[ferredoxin] + NADP(+) + H(+) = 2 oxidized [2Fe-2S]-[ferredoxin] + NADPH. The chain is Ferredoxin--NADP reductase 1 from Bacillus pumilus (strain SAFR-032).